Reading from the N-terminus, the 158-residue chain is Anaerobic ribonucleoside-triphosphate reductase-activating protein (158 aa).

Residues Cys26, Cys30, and Cys33 each coordinate [4Fe-4S] cluster. S-adenosyl-L-methionine contacts are provided by residues 32 to 34 and Gly74; that span reads GCY.

This sequence belongs to the organic radical-activating enzymes family. In terms of assembly, forms a tetramer composed of two NrdD and two NrdG subunits. It depends on [4Fe-4S] cluster as a cofactor.

The protein resides in the cytoplasm. It carries out the reaction glycyl-[protein] + reduced [flavodoxin] + S-adenosyl-L-methionine = glycin-2-yl radical-[protein] + semiquinone [flavodoxin] + 5'-deoxyadenosine + L-methionine + H(+). In terms of biological role, activation of anaerobic ribonucleoside-triphosphate reductase under anaerobic conditions by generation of an organic free radical, using S-adenosylmethionine and reduced flavodoxin as cosubstrates to produce 5'-deoxy-adenosine. The sequence is that of Anaerobic ribonucleoside-triphosphate reductase-activating protein (nrdG) from Pasteurella multocida (strain Pm70).